The primary structure comprises 286 residues: uncharacterized protein (286 aa).

This is an uncharacterized protein from Acidianus sp. F28 (AFV-2).